Reading from the N-terminus, the 552-residue chain is (R)-mandelonitrile lyase-like (552 aa).

Positions 1–28 (MTKRIDSSLLYTALVVLLLLGVVHRSNA) are cleaved as a signal peptide. N-linked (GlcNAc...) asparagine glycosylation occurs at Asn-44. Residue 55-82 (DYIIVGGGTAGCPLAATLSQSFRVLLLE) participates in FAD binding. N-linked (GlcNAc...) asparagine glycosylation is found at Asn-162, Asn-259, and Asn-434. His-492 functions as the Proton acceptor in the catalytic mechanism.

The protein belongs to the GMC oxidoreductase family. Monomer. FAD is required as a cofactor. In terms of processing, glycosylated.

The catalysed reaction is (R)-mandelonitrile = benzaldehyde + hydrogen cyanide. This chain is (R)-mandelonitrile lyase-like, found in Arabidopsis thaliana (Mouse-ear cress).